Here is a 110-residue protein sequence, read N- to C-terminus: Keratin, type I cytoskeletal 19 (110 aa).

The tract at residues 1-8 (FGSGGVFR) is head. A Phosphoserine modification is found at Ser3. The 104-residue stretch at 7-110 (FRITMQNLND…KLEQEIATYR (104 aa)) folds into the IF rod domain. Arg8 is modified (omega-N-methylarginine). The interval 9-42 (ITMQNLNDRLASYLDKVRALEQANGELEVKIRDW) is coil 1A. A linker 1 region spans residues 43 to 45 (YQK). Residues 46–83 (IVLQIDNARTKFETEQALRVLDELTLARKNHEEEISAL) form a coil 1B region. The coil 2 stretch occupies residues 85–110 (ADTERQNQEYQQLMDIKLEQEIATYR). A necessary for interaction with PNN region spans residues 85-110 (ADTERQNQEYQQLMDIKLEQEIATYR).

This sequence belongs to the intermediate filament family. As to quaternary structure, heterotetramer of two type I and two type II keratins. Interacts with PNN and the actin-binding domain of DMD.

In terms of biological role, involved in the organization of myofibers. Together with KRT8, helps to link the contractile apparatus to dystrophin at the costameres of striated muscle. This chain is Keratin, type I cytoskeletal 19, found in Mesocricetus auratus (Golden hamster).